An 877-amino-acid polypeptide reads, in one-letter code: Leucine--tRNA ligase (877 aa).

A 'HIGH' region motif is present at residues 43–53 (PYPSGRIHMGH). Positions 628-632 (KMSKS) match the 'KMSKS' region motif. Residue lysine 631 participates in ATP binding.

The protein belongs to the class-I aminoacyl-tRNA synthetase family.

The protein localises to the cytoplasm. The enzyme catalyses tRNA(Leu) + L-leucine + ATP = L-leucyl-tRNA(Leu) + AMP + diphosphate. The protein is Leucine--tRNA ligase of Brucella suis biovar 1 (strain 1330).